The chain runs to 281 residues: Tumor necrosis factor ligand superfamily member 10 (281 aa).

Over 1-17 (MAMMEVQGGPSLGQTCV) the chain is Cytoplasmic. Residues 18–38 (LIVIFTVLLQSLCVAVTYVYF) form a helical; Signal-anchor for type II membrane protein membrane-spanning segment. At 39 to 281 (TNELKQMQDK…ASFFGAFLVG (243 aa)) the chain is on the extracellular side. Residues 122 to 280 (VAAHITGTRG…EASFFGAFLV (159 aa)) form the THD domain. Residues 124 to 144 (AHITGTRGRSNTLSSPNSKNE) are disordered. Positions 130–141 (RGRSNTLSSPNS) are enriched in polar residues. A Zn(2+)-binding site is contributed by cysteine 230.

Belongs to the tumor necrosis factor family. As to quaternary structure, homotrimer. One TNFSF10 homotrimer interacts with three TNFSF10A mononers. One TNFSF10 homotrimer interacts with three TNFSF10B mononers. Tyrosine phosphorylated by PKDCC/VLK. Widespread; most predominant in spleen, lung and prostate.

It is found in the cell membrane. The protein localises to the secreted. Cytokine that binds to TNFRSF10A/TRAILR1, TNFRSF10B/TRAILR2, TNFRSF10C/TRAILR3, TNFRSF10D/TRAILR4 and possibly also to TNFRSF11B/OPG. Induces apoptosis. Its activity may be modulated by binding to the decoy receptors TNFRSF10C/TRAILR3, TNFRSF10D/TRAILR4 and TNFRSF11B/OPG that cannot induce apoptosis. In Homo sapiens (Human), this protein is Tumor necrosis factor ligand superfamily member 10 (TNFSF10).